A 178-amino-acid polypeptide reads, in one-letter code: Ribosome maturation factor RimP (178 aa).

It belongs to the RimP family.

It localises to the cytoplasm. In terms of biological role, required for maturation of 30S ribosomal subunits. In Streptococcus pyogenes serotype M18 (strain MGAS8232), this protein is Ribosome maturation factor RimP.